Consider the following 89-residue polypeptide: Small ribosomal subunit protein uS15 (89 aa).

The span at 1 to 21 (MALTTEEKKQVLSEYGLHETD) shows a compositional bias: basic and acidic residues. The disordered stretch occupies residues 1–24 (MALTTEEKKQVLSEYGLHETDTGS).

The protein belongs to the universal ribosomal protein uS15 family. Part of the 30S ribosomal subunit. Forms a bridge to the 50S subunit in the 70S ribosome, contacting the 23S rRNA.

Its function is as follows. One of the primary rRNA binding proteins, it binds directly to 16S rRNA where it helps nucleate assembly of the platform of the 30S subunit by binding and bridging several RNA helices of the 16S rRNA. Forms an intersubunit bridge (bridge B4) with the 23S rRNA of the 50S subunit in the ribosome. The protein is Small ribosomal subunit protein uS15 of Rhodococcus jostii (strain RHA1).